Consider the following 338-residue polypeptide: MKVFYDKDCDLSLIKGKTVAIIGYGSQGHAHAQNLNDSGVKVVVGLRKGGASWPKVEKAGLQVAEVADAVKAADVVMILLPDEQIGAVYKNDVAPNIKQGASLVFAHGFNVHYGAVIPRDDLDVWMVAPKAPGHTVRNTYTQGGGVPHLVAVHQDKSGKARDLALSYAMANGGGKAGIIETNFREETETDLFGEQAVLCGGAVELIKAGFETLVEAGYAPEMAYFECLHELKLIVDLIYEGGIANMNYSISNNAEYGEYVTGPRIVTEDTKNAMRAVLKDIQTGEYAKSFLLENIAGAPTLISRRRLNAEHQIEQVGGKLRAMMPWIAKNKLVDQTRN.

Positions 1 to 181 constitute a KARI N-terminal Rossmann domain; sequence MKVFYDKDCD…GGGKAGIIET (181 aa). NADP(+) is bound by residues 24–27, Arg-47, and Ser-52; that span reads YGSQ. His-107 is a catalytic residue. NADP(+) is bound at residue Gly-133. Residues 182–327 enclose the KARI C-terminal knotted domain; that stretch reads NFREETETDL…GKLRAMMPWI (146 aa). Mg(2+) is bound by residues Asp-190, Glu-194, Glu-226, and Glu-230. Ser-251 is a binding site for substrate.

The protein belongs to the ketol-acid reductoisomerase family. Mg(2+) serves as cofactor.

The enzyme catalyses (2R)-2,3-dihydroxy-3-methylbutanoate + NADP(+) = (2S)-2-acetolactate + NADPH + H(+). The catalysed reaction is (2R,3R)-2,3-dihydroxy-3-methylpentanoate + NADP(+) = (S)-2-ethyl-2-hydroxy-3-oxobutanoate + NADPH + H(+). The protein operates within amino-acid biosynthesis; L-isoleucine biosynthesis; L-isoleucine from 2-oxobutanoate: step 2/4. Its pathway is amino-acid biosynthesis; L-valine biosynthesis; L-valine from pyruvate: step 2/4. Functionally, involved in the biosynthesis of branched-chain amino acids (BCAA). Catalyzes an alkyl-migration followed by a ketol-acid reduction of (S)-2-acetolactate (S2AL) to yield (R)-2,3-dihydroxy-isovalerate. In the isomerase reaction, S2AL is rearranged via a Mg-dependent methyl migration to produce 3-hydroxy-3-methyl-2-ketobutyrate (HMKB). In the reductase reaction, this 2-ketoacid undergoes a metal-dependent reduction by NADPH to yield (R)-2,3-dihydroxy-isovalerate. This chain is Ketol-acid reductoisomerase (NADP(+)), found in Polaromonas naphthalenivorans (strain CJ2).